Consider the following 226-residue polypeptide: Transmembrane emp24 domain-containing protein 5 (226 aa).

Residues 1-24 form the signal peptide; it reads MGDKTWLPFPVVLLAALLLPRAAG. At 25–193 the chain is on the lumenal side; that stretch reads FTPSLDSDFT…IQESNFDRVN (169 aa). The GOLD domain maps to 42 to 123; the sequence is KECFYQPMPL…EKVIFFELIL (82 aa). Residues 194–214 form a helical membrane-spanning segment; it reads FWSMVNLVVMVVVSAIQVYML. Over 215–226 the chain is Cytoplasmic; the sequence is KSLFEDKRKSRT. The Mediates export from ER signature appears at 217 to 218; the sequence is LF.

Belongs to the EMP24/GP25L family. As to quaternary structure, interacts with TMED9 and TMED10.

Its subcellular location is the endoplasmic reticulum membrane. The protein localises to the golgi apparatus. The protein resides in the cis-Golgi network membrane. It is found in the endoplasmic reticulum-Golgi intermediate compartment membrane. In terms of biological role, potential role in vesicular protein trafficking, mainly in the early secretory pathway. Required for the maintenance of the Golgi apparatus; involved in protein exchange between Golgi stacks during assembly. Probably not required for COPI-vesicle-mediated retrograde transport. The protein is Transmembrane emp24 domain-containing protein 5 (TMED5) of Bos taurus (Bovine).